The following is a 1128-amino-acid chain: Adipocyte enhancer-binding protein 1 (1128 aa).

Residues Met-1 to Pro-25 form the signal peptide. A disordered region spans residues Gly-40–Glu-368. Basic and acidic residues predominate over residues Pro-77–Gly-109. The segment covering Pro-113 to Ala-163 has biased composition (basic residues). Polar residues-rich tracts occupy residues Arg-178 to Gly-187 and Thr-198 to Glu-209. Residues Arg-249–Arg-261 are compositionally biased toward basic residues. Composition is skewed to basic and acidic residues over residues Pro-267–Pro-282 and Glu-327–Glu-363. The F5/8 type C domain occupies Ile-375 to Cys-532. Positions Met-382–Val-547 are required for DNA-binding and interaction with NFKBIA. 2 interaction with MAPK1 and MAPK3 regions span residues Ala-413–Met-616 and Asp-998–Phe-1128. Asn-520 is a glycosylation site (N-linked (GlcNAc...) asparagine). Residues Val-547–Ser-977 form an interaction with PTEN region. The 342-residue stretch at Arg-555–Val-896 folds into the Peptidase M14 domain. The segment at Asp-933–Phe-1128 is required for transcriptional repression. Residues Leu-1027–Ser-1056 are disordered. Positions Leu-1030 to Leu-1044 are enriched in low complexity.

The protein belongs to the peptidase M14 family. In terms of assembly, interacts with different types of collagen, including collagens I, III, and V. Interacts with GNG5, NFKBIA, MAPK1, MAPK3 and PTEN. May interact with calmodulin. Interaction with MAPK1 may stimulate DNA-binding. Binds to DNA in vitro. Post-translationally, phosphorylated by MAPK1 in vitro. As to expression, expressed in aorta.

It localises to the secreted. In terms of biological role, as a positive regulator of collagen fibrillogenesis, it is probably involved in the organization and remodeling of the extracellular matrix. May positively regulate MAP-kinase activity in adipocytes, leading to enhanced adipocyte proliferation and reduced adipocyte differentiation. May also positively regulate NF-kappa-B activity in macrophages by promoting the phosphorylation and subsequent degradation of I-kappa-B-alpha (NFKBIA), leading to enhanced macrophage inflammatory responsiveness. Can act as a transcriptional repressor. This Rattus norvegicus (Rat) protein is Adipocyte enhancer-binding protein 1 (Aebp1).